A 286-amino-acid chain; its full sequence is MRDSRETFVNHAFVTGYPIKHSRSPLIHGYWLKQFGIAGSYRAHEVTPEAFPEFMGQLRDGGTGFCGGNVTIPHKEMAFELSDRPDELSAELGAANTLWLEDGRICATNTDGRGFVANLDERASGWDRISTAVILGAGGASRAVIQAVRDRGVKTIHVVNRTAARAQELADRFGRAVHAHPIAALSEVMAGAGLFVNTTSLGMDGEPAPAIDFSPLANGAVVTDIVYVPLKTPLLRQAEEQGYRIVDGLGMLLHQAAPGFEKWFGLRPVVDETLRQIIIKDMDVHA.

Shikimate contacts are provided by residues 22–24 (SRS) and Thr-71. Lys-75 functions as the Proton acceptor in the catalytic mechanism. Glu-87 serves as a coordination point for NADP(+). 2 residues coordinate shikimate: Asn-96 and Asp-111. Residues 136 to 140 (GAGGA), 160 to 165 (NRTAAR), and Ile-225 contribute to the NADP(+) site. Position 227 (Tyr-227) interacts with shikimate. Gly-248 contributes to the NADP(+) binding site.

Belongs to the shikimate dehydrogenase family. As to quaternary structure, homodimer.

The catalysed reaction is shikimate + NADP(+) = 3-dehydroshikimate + NADPH + H(+). It participates in metabolic intermediate biosynthesis; chorismate biosynthesis; chorismate from D-erythrose 4-phosphate and phosphoenolpyruvate: step 4/7. Functionally, involved in the biosynthesis of the chorismate, which leads to the biosynthesis of aromatic amino acids. Catalyzes the reversible NADPH linked reduction of 3-dehydroshikimate (DHSA) to yield shikimate (SA). In Sinorhizobium fredii (strain NBRC 101917 / NGR234), this protein is Shikimate dehydrogenase (NADP(+)).